The sequence spans 498 residues: ATP synthase subunit beta, chloroplastic (498 aa).

The residue at position 6 (threonine 6) is a Phosphothreonine. Position 13 is a phosphoserine (serine 13). 172–179 (GGAGVGKT) contributes to the ATP binding site.

Belongs to the ATPase alpha/beta chains family. As to quaternary structure, F-type ATPases have 2 components, CF(1) - the catalytic core - and CF(0) - the membrane proton channel. CF(1) has five subunits: alpha(3), beta(3), gamma(1), delta(1), epsilon(1). CF(0) has four main subunits: a(1), b(1), b'(1) and c(9-12).

The protein resides in the plastid. The protein localises to the chloroplast thylakoid membrane. It carries out the reaction ATP + H2O + 4 H(+)(in) = ADP + phosphate + 5 H(+)(out). Produces ATP from ADP in the presence of a proton gradient across the membrane. The catalytic sites are hosted primarily by the beta subunits. The polypeptide is ATP synthase subunit beta, chloroplastic (Nasturtium officinale (Watercress)).